The following is a 681-amino-acid chain: Serine/threonine-protein kinase PAK 6 (681 aa).

Disordered regions lie at residues Met1–Glu30, Gly149–Leu169, Gln200–Leu256, and Thr268–Trp355. In terms of domain architecture, CRIB spans Ile12–Ser25. The interval Phe26–Leu406 is linker. Low complexity-rich tracts occupy residues Ser201–Thr212 and Thr268–Lys278. A compositionally biased stretch (polar residues) spans Ser308 to Leu333. Residues Leu407–Leu658 form the Protein kinase domain. Residues Ile413 to Val421 and Lys436 each bind ATP. Asp526 serves as the catalytic Proton acceptor. Ser560 carries the phosphoserine; by autocatalysis modification.

The protein belongs to the protein kinase superfamily. STE Ser/Thr protein kinase family. STE20 subfamily. Interacts tightly with GTP-bound but not GDP-bound CDC42/p21 and RAC1. Interacts with the androgen receptor AR and the estrogen receptor ESR1. Interacts with IQGAP1 and PPM1B. Post-translationally, autophosphorylated. Phosphorylated by MAP2K6//MAPKK6, leading to PAK6 activation. As to expression, selectively expressed in brain and testis, with lower levels in multiple tissues including prostate and breast.

It localises to the cytoplasm. Its subcellular location is the nucleus. The catalysed reaction is L-seryl-[protein] + ATP = O-phospho-L-seryl-[protein] + ADP + H(+). It carries out the reaction L-threonyl-[protein] + ATP = O-phospho-L-threonyl-[protein] + ADP + H(+). Serine/threonine protein kinase that plays a role in the regulation of gene transcription. The kinase activity is induced by various effectors including AR or MAP2K6/MAPKK6. Phosphorylates the DNA-binding domain of androgen receptor/AR and thereby inhibits AR-mediated transcription. Also inhibits ESR1-mediated transcription. May play a role in cytoskeleton regulation by interacting with IQGAP1. May protect cells from apoptosis through phosphorylation of BAD. The protein is Serine/threonine-protein kinase PAK 6 (PAK6) of Homo sapiens (Human).